The following is a 299-amino-acid chain: Delta-9 desaturase-like 1 protein (299 aa).

Transmembrane regions (helical) follow at residues isoleucine 31 to phenylalanine 51 and tryptophan 55 to serine 75. Residues histidine 77–histidine 82 carry the Histidine box-1 motif. The Histidine box-2 motif lies at histidine 114–histidine 118. A run of 2 helical transmembrane segments spans residues isoleucine 174–leucine 194 and valine 198–isoleucine 218. A Histidine box-3 motif is present at residues histidine 246–histidine 250. Residues tryptophan 262–threonine 282 form a helical membrane-spanning segment.

It belongs to the fatty acid desaturase type 1 family. Fe cation serves as cofactor.

It localises to the endoplasmic reticulum membrane. Its pathway is lipid metabolism; polyunsaturated fatty acid biosynthesis. The protein is Delta-9 desaturase-like 1 protein of Arabidopsis thaliana (Mouse-ear cress).